Reading from the N-terminus, the 265-residue chain is 3-methyl-2-oxobutanoate hydroxymethyltransferase (265 aa).

Asp45 and Asp84 together coordinate Mg(2+). 3-methyl-2-oxobutanoate-binding positions include 45-46, Asp84, and Lys112; that span reads DS. Glu114 contacts Mg(2+). The Proton acceptor role is filled by Glu181.

It belongs to the PanB family. As to quaternary structure, homodecamer; pentamer of dimers. It depends on Mg(2+) as a cofactor.

The protein resides in the cytoplasm. It carries out the reaction 3-methyl-2-oxobutanoate + (6R)-5,10-methylene-5,6,7,8-tetrahydrofolate + H2O = 2-dehydropantoate + (6S)-5,6,7,8-tetrahydrofolate. The protein operates within cofactor biosynthesis; (R)-pantothenate biosynthesis; (R)-pantoate from 3-methyl-2-oxobutanoate: step 1/2. Functionally, catalyzes the reversible reaction in which hydroxymethyl group from 5,10-methylenetetrahydrofolate is transferred onto alpha-ketoisovalerate to form ketopantoate. This Yersinia pseudotuberculosis serotype IB (strain PB1/+) protein is 3-methyl-2-oxobutanoate hydroxymethyltransferase.